We begin with the raw amino-acid sequence, 702 residues long: MAAPAADDDDHRAALPREEDDGEEEEGSEEEVESDDEEEEEGEGYDWSEEDDPEAASLAGICDPDAGSYDDPTFDPAADGDLEVDAVLRSRMARMSLSSARKDRKGSRMPKMGKEEMDLLAMVDKLMHDGQLEKLKVYECKAYLRMHKLRLSGNKEVLLTRIRGQIEVKTMGEVKYPVSSFVLNCQGDSCKGDVVVFEQNIYKRKKGAPRGVKGHLCGQRTNAGRIIKESYGTKKQQHTFTIEILWSRGYKPWPPLHPLLIKGRNLYKDKTMRQPWLDEEERNRALQEKHARGYVARKTREVRIKDKENERMRRLNRNKENKSKGQDNMNKKSSQAVFPQHTVTTNTVQKRAEKIIPSLQHGESGNSSQQHLSSKQTPTEQLLHYLPQFPHPQQHNEVLLQKGTSRTSTTQLINHQAPSLQHAVKVETTQQQQQQQPPKSIKPAPIQQSSAYPQQYPKHQHHNQALPRVPPSQEQRAAVSQTSAARQDFTNHQAPPSRQHGGSENMRRQEISSRPTPTPTPQQAVSYTQQQPPNHQYRNEAFWQQGGTSTSRTGFMDRQSNNWGSTDHDKPAFQPFTQKAKTYQHGSNGSGHHQARVDRETHQPLRSRNQDYHWEDQSYHHQQNHHQNYYGHRQMSQDQYHHQQNHHQNYHGRQGMNGNQYHDRQNHNQNPQRFRPWKPCFIYQQQGWCPYGENCKFMHDLR.

Residues 1-77 (MAAPAADDDD…SYDDPTFDPA (77 aa)) form a disordered region. Residues 18–54 (EEDDGEEEEGSEEEVESDDEEEEEGEGYDWSEEDDPE) show a composition bias toward acidic residues. Residues 132 to 166 (LEKLKVYECKAYLRMHKLRLSGNKEVLLTRIRGQI) enclose the SAP domain. 4 disordered regions span residues 288 to 349 (EKHA…NTVQ), 405 to 532 (SRTS…QQQP), 546 to 602 (GGTS…RETH), and 634 to 673 (QMSQDQYHHQQNHHQNYHGRQGMNGNQYHDRQNHNQNPQR). Residues 298–325 (KTREVRIKDKENERMRRLNRNKENKSKG) are compositionally biased toward basic and acidic residues. Polar residues-rich tracts occupy residues 326–349 (QDNMNKKSSQAVFPQHTVTTNTVQ) and 405–419 (SRTSTTQLINHQAPS). Residues 430-448 (QQQQQQQPPKSIKPAPIQQ) are compositionally biased toward low complexity. Composition is skewed to polar residues over residues 472 to 502 (SQEQRAAVSQTSAARQDFTNHQAPPSRQHGG), 522 to 532 (QQAVSYTQQQP), 546 to 565 (GGTSTSRTGFMDRQSNNWGS), and 575 to 591 (PFTQKAKTYQHGSNGSG). A C3H1-type zinc finger spans residues 674 to 702 (FRPWKPCFIYQQQGWCPYGENCKFMHDLR).

The protein is Zinc finger CCCH domain-containing protein 62 of Oryza sativa subsp. japonica (Rice).